A 95-amino-acid chain; its full sequence is Large ribosomal subunit protein bL27 (95 aa).

The interval 1–25 (MAHKKGTGSTRNGRDSNAQRLGVKR) is disordered. Over residues 7 to 19 (TGSTRNGRDSNAQ) the composition is skewed to polar residues.

Belongs to the bacterial ribosomal protein bL27 family.

This is Large ribosomal subunit protein bL27 from Gloeobacter violaceus (strain ATCC 29082 / PCC 7421).